A 675-amino-acid polypeptide reads, in one-letter code: MRVNDNQPFDLVTNYQPAGDQPQAIKKLVSGIEQGNRNQLLLGVTGSGKTYTMANVIAQTQRPTIVMAHNKTLAAQLYGEFKAFFPNNAVEYFVSYYDYYQPEAYVPSSDTFIEKDAAINDHIDQMRLSATRALLERRDAIIVASVSAIYGLGDPEAYMKMLLHVVEGDRINRDDLIRRLVEMQYTRNELEFLRGTYRIRGEILDVFPAESDQFAIRIELFDDEVDSIRWFDPLTGKMQRKVPRVTIYPKSHYVTPKDNLSRAIETIKDELQDQLKFFREHDKLLEAQRIEQRTRYDLEMMQQLGYTNGIENYSRHLSGRSPGAAPPTLFDYIPEDALLIIDESHVTVPQIGAMYKGDRSRKENLVNYGFRLPSALDNRPMKFEEWERIVPTTVFVSATPAKYELEKSDQIVEQVVRPTGLIDPEIEIRPVLTQVDDVLSEINIRKEMDERVLITTLTKRMAEDLTSYLKEYGVKVAYLHSDIDTVERVKIIHELRTGVYDVLVGINLLREGLDMPEVSLVAILDADKEGFLRSERSLIQTIGRAARNIKGKAILYADRMTDSMQKAIDETERRREKQIEFNKIHGITPRSAVRQKVKEIDTGEVFNDDDIEGKISEQARALSADERHILADPKLFAKHMSKLEKEMLKASKELQFEQAARLRDEILRLKAQMLH.

Residues 30 to 417 form the Helicase ATP-binding domain; sequence SGIEQGNRNQ…SDQIVEQVVR (388 aa). 43-50 provides a ligand contact to ATP; that stretch reads GVTGSGKT. Residues 96-119 carry the Beta-hairpin motif; it reads YYDYYQPEAYVPSSDTFIEKDAAI. Residues 434-601 form the Helicase C-terminal domain; the sequence is QVDDVLSEIN…AVRQKVKEID (168 aa). One can recognise a UVR domain in the interval 637–672; sequence AKHMSKLEKEMLKASKELQFEQAARLRDEILRLKAQ.

This sequence belongs to the UvrB family. Forms a heterotetramer with UvrA during the search for lesions. Interacts with UvrC in an incision complex.

Its subcellular location is the cytoplasm. In terms of biological role, the UvrABC repair system catalyzes the recognition and processing of DNA lesions. A damage recognition complex composed of 2 UvrA and 2 UvrB subunits scans DNA for abnormalities. Upon binding of the UvrA(2)B(2) complex to a putative damaged site, the DNA wraps around one UvrB monomer. DNA wrap is dependent on ATP binding by UvrB and probably causes local melting of the DNA helix, facilitating insertion of UvrB beta-hairpin between the DNA strands. Then UvrB probes one DNA strand for the presence of a lesion. If a lesion is found the UvrA subunits dissociate and the UvrB-DNA preincision complex is formed. This complex is subsequently bound by UvrC and the second UvrB is released. If no lesion is found, the DNA wraps around the other UvrB subunit that will check the other stand for damage. The protein is UvrABC system protein B of Acinetobacter baylyi (strain ATCC 33305 / BD413 / ADP1).